The primary structure comprises 367 residues: MSERILTINPGSTSTKIGIFDGTEQVFTKTLRHSAEAVGGPLSDQLNIRRQVVLDVLAQEQIDLKALTAIVGRGGLLRPLVSGTYRVNQEMREDLLNGTFGIHASNLGGLLADEIGQTLSIPAFIVDPVVVDELEPIARLTGLPELERKSIFHALNQKAVAKRYAKENGIPYEQLRLIVAHMGGGITVGAHLNGRVIDVNNGLDGEGAFSPERSGSLPVGQLVELCYSTKYKLEEMKRLVVGSGGLVAHLGTYDAVEIERRIDDGDEKAALLYEAMAYRVAKEIAAQSAVLYGQVDAVILTGGLAYSDRLTKAIEERIAHIGSIIRIPGEDELRALAEGVIRVLRQEEQVKEYGGELTWLENSTSLS.

It belongs to the acetokinase family.

The protein resides in the cytoplasm. The enzyme catalyses butanoate + ATP = butanoyl phosphate + ADP. The protein is Probable butyrate kinase of Exiguobacterium sibiricum (strain DSM 17290 / CCUG 55495 / CIP 109462 / JCM 13490 / 255-15).